A 391-amino-acid chain; its full sequence is Phosphoglycerate kinase (391 aa).

Residues D21 to N23, R36, H59 to R62, R114, and R147 each bind substrate. Residues K198, E315, and G344–T347 each bind ATP.

The protein belongs to the phosphoglycerate kinase family. As to quaternary structure, monomer.

The protein resides in the cytoplasm. It carries out the reaction (2R)-3-phosphoglycerate + ATP = (2R)-3-phospho-glyceroyl phosphate + ADP. It participates in carbohydrate degradation; glycolysis; pyruvate from D-glyceraldehyde 3-phosphate: step 2/5. The polypeptide is Phosphoglycerate kinase (Actinobacillus pleuropneumoniae serotype 5b (strain L20)).